The primary structure comprises 113 residues: U11-theraphotoxin-Hhn1f (113 aa).

Positions 1–21 (MNTVRVTFLLVFVLAVSLGQA) are cleaved as a signal peptide. A propeptide spanning residues 22-74 (DKDENRMEMQEKTEQGKSYLDFAENLLLQKLEELEAKLLEEDSEESRNSRQKR) is cleaved from the precursor. The disordered stretch occupies residues 61–83 (EEDSEESRNSRQKRCIGEGVPCD). 3 disulfides stabilise this stretch: Cys-75-Cys-90, Cys-82-Cys-95, and Cys-89-Cys-110.

Belongs to the neurotoxin 14 (magi-1) family. 01 (HNTX-16) subfamily. Expressed by the venom gland.

It is found in the secreted. Its function is as follows. Probable ion channel inhibitor. This Cyriopagopus hainanus (Chinese bird spider) protein is U11-theraphotoxin-Hhn1f.